Reading from the N-terminus, the 103-residue chain is Small ribosomal subunit protein uS10 (103 aa).

This sequence belongs to the universal ribosomal protein uS10 family. As to quaternary structure, part of the 30S ribosomal subunit.

Its function is as follows. Involved in the binding of tRNA to the ribosomes. This chain is Small ribosomal subunit protein uS10, found in Alteromonas mediterranea (strain DSM 17117 / CIP 110805 / LMG 28347 / Deep ecotype).